Reading from the N-terminus, the 158-residue chain is Ankyrin repeat domain-containing protein 37 (158 aa).

ANK repeat units follow at residues 1 to 25, 30 to 59, and 63 to 92; these read MLLL…SVNA, CEQS…DLNQ, and FGEA…QIDL. The Nuclear localization signal motif lies at 129–149; sequence EQPNKDHCVQVLRLKRSFGSE.

Ubiquitinated by the CRL2(FEM1B) complex, leading to its degradation.

The protein resides in the nucleus. It is found in the cytoplasm. This is Ankyrin repeat domain-containing protein 37 (ANKRD37) from Bos taurus (Bovine).